Consider the following 372-residue polypeptide: Glycerophosphodiester phosphodiesterase GDPD6 (372 aa).

A signal peptide spans 1-21 (MAFKYLLPLLLLSLLVANCAS). Residues 32 to 58 (KHATKKPLQTSRPYNLAHRGSNGELPE) are disordered. The GP-PDE domain occupies 44–362 (PYNLAHRGSN…DFTGSLHNYQ (319 aa)). Residues asparagine 120, asparagine 239, and asparagine 260 are each glycosylated (N-linked (GlcNAc...) asparagine).

This sequence belongs to the glycerophosphoryl diester phosphodiesterase family. As to expression, expressed in flowers and siliques.

It catalyses the reaction a sn-glycero-3-phosphodiester + H2O = an alcohol + sn-glycerol 3-phosphate + H(+). In Arabidopsis thaliana (Mouse-ear cress), this protein is Glycerophosphodiester phosphodiesterase GDPD6.